Here is a 231-residue protein sequence, read N- to C-terminus: Phosphatidylserine decarboxylase proenzyme (231 aa).

Ser188 acts as the Schiff-base intermediate with substrate; via pyruvic acid in catalysis. The residue at position 188 (Ser188) is a Pyruvic acid (Ser); by autocatalysis.

This sequence belongs to the phosphatidylserine decarboxylase family. PSD-A subfamily. As to quaternary structure, heterodimer of a large membrane-associated beta subunit and a small pyruvoyl-containing alpha subunit. Requires pyruvate as cofactor. Post-translationally, is synthesized initially as an inactive proenzyme. Formation of the active enzyme involves a self-maturation process in which the active site pyruvoyl group is generated from an internal serine residue via an autocatalytic post-translational modification. Two non-identical subunits are generated from the proenzyme in this reaction, and the pyruvate is formed at the N-terminus of the alpha chain, which is derived from the carboxyl end of the proenzyme. The post-translation cleavage follows an unusual pathway, termed non-hydrolytic serinolysis, in which the side chain hydroxyl group of the serine supplies its oxygen atom to form the C-terminus of the beta chain, while the remainder of the serine residue undergoes an oxidative deamination to produce ammonia and the pyruvoyl prosthetic group on the alpha chain.

The protein resides in the cell membrane. The catalysed reaction is a 1,2-diacyl-sn-glycero-3-phospho-L-serine + H(+) = a 1,2-diacyl-sn-glycero-3-phosphoethanolamine + CO2. It participates in phospholipid metabolism; phosphatidylethanolamine biosynthesis; phosphatidylethanolamine from CDP-diacylglycerol: step 2/2. Its function is as follows. Catalyzes the formation of phosphatidylethanolamine (PtdEtn) from phosphatidylserine (PtdSer). The sequence is that of Phosphatidylserine decarboxylase proenzyme from Rickettsia africae (strain ESF-5).